The following is an 86-amino-acid chain: MQTLFFTLIAFVAIILLMSIGFIIKKQSLKGSCGGLSTLGIAKACDCDKPCDTHHSKLDAGDEQAKAEYEQKFAKKDDDSQFYQVK.

Residues Leu4 to Ile24 traverse the membrane as a helical segment.

The protein resides in the membrane. This is an uncharacterized protein from Haemophilus influenzae (strain ATCC 51907 / DSM 11121 / KW20 / Rd).